Consider the following 248-residue polypeptide: tRNA uridine(34) hydroxylase (248 aa).

The Rhodanese domain occupies 127–221; sequence RGRPLVLLDT…YFEEVGGEGY (95 aa). Residue Cys-181 is the Cysteine persulfide intermediate of the active site.

The protein belongs to the TrhO family.

It catalyses the reaction uridine(34) in tRNA + AH2 + O2 = 5-hydroxyuridine(34) in tRNA + A + H2O. Catalyzes oxygen-dependent 5-hydroxyuridine (ho5U) modification at position 34 in tRNAs. The chain is tRNA uridine(34) hydroxylase from Xanthomonas euvesicatoria pv. vesicatoria (strain 85-10) (Xanthomonas campestris pv. vesicatoria).